We begin with the raw amino-acid sequence, 314 residues long: 2,3-dihydroxyphenylpropionate/2,3-dihydroxicinnamic acid 1,2-dioxygenase (314 aa).

The active-site Proton donor is His115. His179 acts as the Proton acceptor in catalysis.

It belongs to the LigB/MhpB extradiol dioxygenase family. Homotetramer. Fe(2+) is required as a cofactor.

The enzyme catalyses 3-(2,3-dihydroxyphenyl)propanoate + O2 = (2Z,4E)-2-hydroxy-6-oxonona-2,4-dienedioate + H(+). It carries out the reaction (2E)-3-(2,3-dihydroxyphenyl)prop-2-enoate + O2 = (2Z,4E,7E)-2-hydroxy-6-oxonona-2,4,7-trienedioate + H(+). Its pathway is aromatic compound metabolism; 3-phenylpropanoate degradation. Its function is as follows. Catalyzes the non-heme iron(II)-dependent oxidative cleavage of 2,3-dihydroxyphenylpropionic acid and 2,3-dihydroxicinnamic acid into 2-hydroxy-6-ketononadienedioate and 2-hydroxy-6-ketononatrienedioate, respectively. The protein is 2,3-dihydroxyphenylpropionate/2,3-dihydroxicinnamic acid 1,2-dioxygenase of Rhodococcus jostii (strain RHA1).